Consider the following 193-residue polypeptide: Bifunctional protein PyrR (193 aa).

Substrate-binding positions include 57-58 (TR), arginine 98, 119-127 (DDVLYSGRS), arginine 152, and valine 176. The short motif at 115-127 (VILVDDVLYSGRS) is the PRPP-binding element.

This sequence belongs to the purine/pyrimidine phosphoribosyltransferase family. PyrR subfamily.

The catalysed reaction is UMP + diphosphate = 5-phospho-alpha-D-ribose 1-diphosphate + uracil. Its function is as follows. Regulates the transcription of the pyrimidine nucleotide (pyr) operon in response to exogenous pyrimidines. In terms of biological role, also displays a weak uracil phosphoribosyltransferase activity which is not physiologically significant. The sequence is that of Bifunctional protein PyrR from Mycobacterium bovis (strain ATCC BAA-935 / AF2122/97).